We begin with the raw amino-acid sequence, 457 residues long: Siroheme synthase (457 aa).

The precorrin-2 dehydrogenase /sirohydrochlorin ferrochelatase stretch occupies residues 1-204 (MDHLPIFCQL…NDQKAITETT (204 aa)). NAD(+) is bound by residues 22–23 (DV) and 43–44 (LA). Serine 128 carries the phosphoserine modification. The interval 216–457 (GEVVLVGAGP…RDKLNWFSNH (242 aa)) is uroporphyrinogen-III C-methyltransferase. An S-adenosyl-L-methionine-binding site is contributed by proline 225. The Proton acceptor role is filled by aspartate 248. Lysine 270 (proton donor) is an active-site residue. S-adenosyl-L-methionine contacts are provided by residues 301–303 (GGD), isoleucine 306, 331–332 (TA), methionine 382, and glycine 411.

This sequence in the N-terminal section; belongs to the precorrin-2 dehydrogenase / sirohydrochlorin ferrochelatase family. The protein in the C-terminal section; belongs to the precorrin methyltransferase family.

It carries out the reaction uroporphyrinogen III + 2 S-adenosyl-L-methionine = precorrin-2 + 2 S-adenosyl-L-homocysteine + H(+). It catalyses the reaction precorrin-2 + NAD(+) = sirohydrochlorin + NADH + 2 H(+). The enzyme catalyses siroheme + 2 H(+) = sirohydrochlorin + Fe(2+). It participates in cofactor biosynthesis; adenosylcobalamin biosynthesis; precorrin-2 from uroporphyrinogen III: step 1/1. It functions in the pathway cofactor biosynthesis; adenosylcobalamin biosynthesis; sirohydrochlorin from precorrin-2: step 1/1. The protein operates within porphyrin-containing compound metabolism; siroheme biosynthesis; precorrin-2 from uroporphyrinogen III: step 1/1. Its pathway is porphyrin-containing compound metabolism; siroheme biosynthesis; siroheme from sirohydrochlorin: step 1/1. It participates in porphyrin-containing compound metabolism; siroheme biosynthesis; sirohydrochlorin from precorrin-2: step 1/1. Multifunctional enzyme that catalyzes the SAM-dependent methylations of uroporphyrinogen III at position C-2 and C-7 to form precorrin-2 via precorrin-1. Then it catalyzes the NAD-dependent ring dehydrogenation of precorrin-2 to yield sirohydrochlorin. Finally, it catalyzes the ferrochelation of sirohydrochlorin to yield siroheme. In Shigella dysenteriae serotype 1 (strain Sd197), this protein is Siroheme synthase.